Consider the following 546-residue polypeptide: MGEVAKEEVEERRSIVAVNPQPSKGLVSSAVDLIEKAVVYLFHDKSKPCHYLSGNFAPVVDETPPCPDLPVRGHLPECLNGEFVRVGPNPKFMPVAGYHWFDGDGMIHGMRIKDGKATYASRYVKTSRLKQEEYFEGPKFMKIGDLKGFFGLFMVQMQLLRAKLKVIDVSYGVGTGNTALIYHHGKLLALSEADKPYVVKVLEDGDLQTLGLLDYDKRLSHSFTAHPKVDPFTDEMFTFGYAHTPPYVTYRVISKDGVMRDPVPITIPASVMMHDFAITENYSIFMDLPLYFQPKEMVKGGKLIFSFDATKKARFGVLPRYAKDDSLIRWFELPNCFIFHNANAWEEGDEVVLITCRLENPDLDMVNGAVKEKLENFKNELYEMRFNMKTGAASQKQLSVSAVDFPRINESYTTRKQRYVYGTILDNITKVKGIIKFDLHAEPEAGKKKLEVGGNVQGIFDLGPGRYGSEAVFVPRERGIKSEEDDGYLIFFVHDENTGKSEVNVIDAKTMSAEPVAVVELPNRVPYGFHAFFVNEEQLQWQQTDV.

Residues His226, His274, His340, and His530 each contribute to the Fe cation site.

The protein belongs to the carotenoid oxygenase family. The cofactor is Fe(2+). In vegetative and floral tissues.

The protein resides in the cytoplasm. The catalysed reaction is all-trans-zeaxanthin + 2 O2 = 4,9-dimethyldodeca-2,4,6,8,10-pentaenedial + 2 (3R)-hydroxy-beta-ionone. Functionally, cleaves a variety of carotenoids symmetrically at both the 9-10 and 9'-10' double bonds. Catalyzes the formation of 4,9-dimethyldodeca-2,4,6,8,10-pentaene-1,12-dialdehyde and probably hydroxydihydro-beta-ionone from zeaxanthin. The polypeptide is Carotenoid 9,10(9',10')-cleavage dioxygenase (CCD) (Crocus sativus (Saffron)).